The primary structure comprises 146 residues: Lysozyme C (146 aa).

The signal sequence occupies residues 1 to 16 (SGKYISWEDSCSYLQL). The region spanning 17 to 146 (QKYERCELAK…LSQWTQGCKL (130 aa)) is the C-type lysozyme domain. Cystine bridges form between Cys-22/Cys-144, Cys-46/Cys-132, Cys-81/Cys-97, and Cys-93/Cys-111. Residues Glu-51 and Asp-69 contribute to the active site.

It belongs to the glycosyl hydrolase 22 family. In terms of tissue distribution, expressed by the skin glands.

The protein resides in the secreted. The catalysed reaction is Hydrolysis of (1-&gt;4)-beta-linkages between N-acetylmuramic acid and N-acetyl-D-glucosamine residues in a peptidoglycan and between N-acetyl-D-glucosamine residues in chitodextrins.. Functionally, lysozymes have primarily a bacteriolytic function; those in tissues and body fluids are associated with the monocyte-macrophage system and enhance the activity of immunoagents. Has antibacterial activity against the Gram-positive bacterium S.aureus and against the Gram-negative bacterium E.coli with a MIC of 1 uM and 8 uM respectively. No antifungal activity against C.albicans. This chain is Lysozyme C, found in Bufo gargarizans andrewsi (Andrew's toad).